Reading from the N-terminus, the 500-residue chain is Endothelial lipase (500 aa).

The first 20 residues, 1-20, serve as a signal peptide directing secretion; that stretch reads MRNTVFLLGFWSVYCYFPAG. Cys64 and Cys77 are joined by a disulfide. 3 N-linked (GlcNAc...) asparagine glycosylation sites follow: Asn65, Asn80, and Asn136. The active-site Nucleophile is the Ser169. The Charge relay system role is filled by Asp193. An intrachain disulfide couples Cys252 to Cys272. His274 functions as the Charge relay system in the catalytic mechanism. 2 disulfides stabilise this stretch: Cys297-Cys316 and Cys308-Cys311. Position 325-337 (325-337) interacts with heparin; that stretch reads KMRKKRNSKMYLK. Residues 347-482 form the PLAT domain; sequence YHYQLKVHMF…SPGQELWFHK (136 aa). N-linked (GlcNAc...) asparagine glycosylation is found at Asn359 and Asn393. A disulfide bond links Cys463 and Cys483. N-linked (GlcNAc...) asparagine glycosylation is present at Asn491.

This sequence belongs to the AB hydrolase superfamily. Lipase family. In terms of assembly, head to tail homodimer. As to expression, expressed in placenta, lung, liver, testis and spleen.

Its subcellular location is the secreted. It catalyses the reaction a triacylglycerol + H2O = a diacylglycerol + a fatty acid + H(+). The enzyme catalyses a 1,2-diacyl-sn-glycero-3-phosphocholine + H2O = a 2-acyl-sn-glycero-3-phosphocholine + a fatty acid + H(+). It carries out the reaction 1,2,3-tri-(9Z-octadecenoyl)-glycerol + H2O = di-(9Z)-octadecenoylglycerol + (9Z)-octadecenoate + H(+). The catalysed reaction is 1,2,3-tributanoylglycerol + H2O = dibutanoylglycerol + butanoate + H(+). It catalyses the reaction 1,2-dihexadecanoyl-sn-glycero-3-phosphocholine + H2O = hexadecanoyl-sn-glycero-3-phosphocholine + hexadecanoate + H(+). Functionally, exerts both phospholipase and triglyceride lipase activities. More active as a phospholipase than a triglyceride lipase. Hydrolyzes triglycerides, both with short-chain fatty acyl groups (tributyrin) and long-chain fatty acyl groups (triolein) with similar levels of activity toward both types of substrates. Hydrolyzes high density lipoproteins (HDL) more efficiently than other lipoproteins. This chain is Endothelial lipase (Lipg), found in Mus musculus (Mouse).